The chain runs to 486 residues: Palmitoleoyl-protein carboxylesterase notum2 (486 aa).

The N-terminal stretch at 1 to 18 is a signal peptide; that stretch reads MRILEIFAILLILKEVRP. An N-linked (GlcNAc...) asparagine glycan is attached at Asn183. Active-site charge relay system residues include Ser223, Asp331, and His380.

The protein belongs to the pectinacetylesterase family. Notum subfamily.

The protein resides in the secreted. The enzyme catalyses [Wnt protein]-O-(9Z)-hexadecenoyl-L-serine + H2O = [Wnt protein]-L-serine + (9Z)-hexadecenoate + H(+). Carboxylesterase that acts as a key negative regulator of the Wnt signaling pathway by specifically mediating depalmitoleoylation of WNT proteins. Serine palmitoleoylation of WNT proteins is required for efficient binding to frizzled receptors. The chain is Palmitoleoyl-protein carboxylesterase notum2 from Xenopus laevis (African clawed frog).